A 253-amino-acid chain; its full sequence is Zinc finger protein JAGGED (253 aa).

The segment at M1–E46 is disordered. Over residues D16–L26 the composition is skewed to basic and acidic residues. The segment at Y51 to H73 adopts a C2H2-type zinc-finger fold.

In terms of assembly, interacts with GATA18/HAN. Expressed in the emerging leaf, sepal, petal, stamen and carpel primordia. Not expressed in the apical shoot meristem (SAM).

It localises to the nucleus. Its function is as follows. Controls the morphogenesis of lateral organs. Functions in lateral organ shape and is sufficient to induce proliferation and growth of lateral organ tissue. Is necessary and sufficient for bract formation, but its expression is excluded from the cryptic bract, which could be a cause of bractless flowers in Arabidopsis. Participates with FIL and YAB3 in regulating valve margin development. Functions with JGL to define stamen and carpel shape. Functions with AS1 and AS2 in the sepal and petal primordia to repress boundary-specifying genes for normal development of the organs. This is Zinc finger protein JAGGED (JAG) from Arabidopsis thaliana (Mouse-ear cress).